We begin with the raw amino-acid sequence, 381 residues long: Creatine kinase B-type (381 aa).

Position 4 is a phosphoserine (Ser-4). Residues 11–98 form the Phosphagen kinase N-terminal domain; the sequence is KLRFPAEDEF…FDPIIEERHG (88 aa). Thr-35 is modified (phosphothreonine). Residue Lys-45 forms a Glycyl lysine isopeptide (Lys-Gly) (interchain with G-Cter in ubiquitin) linkage. Val-72 lines the creatine pocket. A compositionally biased stretch (basic and acidic residues) spans 96-110; sequence RHGGYQPSDEHKTDL. The segment at 96-123 is disordered; sequence RHGGYQPSDEHKTDLNPDNLQGGDDLDP. Residue Lys-107 forms a Glycyl lysine isopeptide (Lys-Gly) (interchain with G-Cter in ubiquitin) linkage. Tyr-125 bears the Phosphotyrosine mark. In terms of domain architecture, Phosphagen kinase C-terminal spans 125 to 367; it reads YVLSSRVRTG…KLLIEMEQRL (243 aa). Residues 128–132, Arg-130, Arg-132, and His-191 each bind ATP; that span reads SSRVR. The interval 130–138 is internal MTS-like signal; that stretch reads RVRTGRSIR. Ser-199 bears the Phosphoserine mark. Glu-232 lines the creatine pocket. Arg-236 lines the ATP pocket. Tyr-269 bears the 3'-nitrotyrosine mark. Creatine is bound at residue Ser-285. Residue Arg-292 coordinates ATP. At Ser-309 the chain carries Phosphoserine. ATP is bound by residues Arg-320, 320 to 325, and Asp-335; that span reads RGTGGV. Thr-322 carries the phosphothreonine modification. A Glycyl lysine isopeptide (Lys-Gly) (interchain with G-Cter in ubiquitin) cross-link involves residue Lys-381.

Belongs to the ATP:guanido phosphotransferase family. As to quaternary structure, dimer of identical or non-identical chains, which can be either B (brain type) or M (muscle type). With MM being the major form in skeletal muscle and myocardium, MB existing in myocardium, and BB existing in many tissues, especially brain. Interacts with SLC12A6 (via C-terminus); the interaction may be required for SLC12A6 potassium-chloride cotransport activity. Post-translationally, ubiquitinated by the ECS(ASB9) complex, leading to its degradation by the proteasome. In terms of tissue distribution, expressed in hippocampus and corpus callosum (at protein level).

It localises to the cytoplasm. Its subcellular location is the cytosol. The protein resides in the mitochondrion. The protein localises to the cell membrane. The catalysed reaction is creatine + ATP = N-phosphocreatine + ADP + H(+). In terms of biological role, reversibly catalyzes the transfer of phosphate between ATP and various phosphogens (e.g. creatine phosphate). Creatine kinase isoenzymes play a central role in energy transduction in tissues with large, fluctuating energy demands, such as skeletal muscle, heart, brain and spermatozoa. Acts as a key regulator of adaptive thermogenesis as part of the futile creatine cycle: localizes to the mitochondria of thermogenic fat cells and acts by mediating phosphorylation of creatine to initiate a futile cycle of creatine phosphorylation and dephosphorylation. During the futile creatine cycle, creatine and N-phosphocreatine are in a futile cycle, which dissipates the high energy charge of N-phosphocreatine as heat without performing any mechanical or chemical work. This chain is Creatine kinase B-type, found in Mus musculus (Mouse).